The chain runs to 434 residues: Pre-B-cell leukemia transcription factor 3 (434 aa).

Positions 20 to 41 (SVQGGMALPPPPHGHEGADGDG) are disordered. Basic and acidic residues predominate over residues 32-41 (HGHEGADGDG). Positions 41-234 (GRKQDIGDIL…VMILRSRFLD (194 aa)) constitute a PBC domain. Residues 48–127 (DILHQIMTIT…EGVSGPEKGG (80 aa)) form a PBC-A region. The PBC-B stretch occupies residues 130–234 (AAAAAAAAAS…VMILRSRFLD (105 aa)). The segment at residues 235-297 (ARRKRRNFSK…NKRIRYKKNI (63 aa)) is a DNA-binding region (homeobox; TALE-type). Positions 326–341 (NQTNSPTTPNSGSSGS) are enriched in low complexity. Disordered regions lie at residues 326-349 (NQTN…NSGD) and 403-434 (LNAN…DTSN). Positions 403-422 (LNANGGWQDATTPSSVTSPT) are enriched in polar residues.

This sequence belongs to the TALE/PBX homeobox family. Interacts with PBXIP1. As to expression, ubiquitously expressed.

Its subcellular location is the nucleus. Transcriptional activator that binds the sequence 5'-ATCAATCAA-3'. This chain is Pre-B-cell leukemia transcription factor 3 (PBX3), found in Homo sapiens (Human).